Reading from the N-terminus, the 389-residue chain is Chorismate synthase (389 aa).

Positions 40 and 46 each coordinate NADP(+). Residues 130-132 (RAS), 251-252 (QA), glycine 297, 312-316 (KPIST), and arginine 338 contribute to the FMN site.

This sequence belongs to the chorismate synthase family. In terms of assembly, homotetramer. It depends on FMNH2 as a cofactor.

The catalysed reaction is 5-O-(1-carboxyvinyl)-3-phosphoshikimate = chorismate + phosphate. The protein operates within metabolic intermediate biosynthesis; chorismate biosynthesis; chorismate from D-erythrose 4-phosphate and phosphoenolpyruvate: step 7/7. Functionally, catalyzes the anti-1,4-elimination of the C-3 phosphate and the C-6 proR hydrogen from 5-enolpyruvylshikimate-3-phosphate (EPSP) to yield chorismate, which is the branch point compound that serves as the starting substrate for the three terminal pathways of aromatic amino acid biosynthesis. This reaction introduces a second double bond into the aromatic ring system. The sequence is that of Chorismate synthase from Solibacter usitatus (strain Ellin6076).